Consider the following 445-residue polypeptide: ATP synthase subunit b-delta (445 aa).

Residues Met1–Ala168 are ATP synthase subunit b. A helical transmembrane segment spans residues Ile3–Val23. An ATP synthase subunit delta region spans residues Thr169–Asp445.

The protein in the N-terminal section; belongs to the ATPase B chain family. This sequence in the C-terminal section; belongs to the ATPase delta chain family. In terms of assembly, F-type ATPases have 2 components, F(1) - the catalytic core - and F(0) - the membrane proton channel. F(1) has five subunits: alpha(3), beta(3), gamma(1), delta(1), epsilon(1). F(0) has three main subunits: a(1), b(2) and c(10-14). The alpha and beta chains form an alternating ring which encloses part of the gamma chain. F(1) is attached to F(0) by a central stalk formed by the gamma and epsilon chains, while a peripheral stalk is formed by the delta and b chains.

It is found in the cell membrane. In terms of biological role, f(1)F(0) ATP synthase produces ATP from ADP in the presence of a proton or sodium gradient. F-type ATPases consist of two structural domains, F(1) containing the extramembraneous catalytic core and F(0) containing the membrane proton channel, linked together by a central stalk and a peripheral stalk. During catalysis, ATP synthesis in the catalytic domain of F(1) is coupled via a rotary mechanism of the central stalk subunits to proton translocation. Functionally, this fusion protein includes a component of the F(0) channel (subunit b) and of the F(1) subunit (subunit delta). Two copies of subunit b and one of delta together form the peripheral 'stator' stalk which links F(1) to F(0). In Mycolicibacterium smegmatis (strain ATCC 700084 / mc(2)155) (Mycobacterium smegmatis), this protein is ATP synthase subunit b-delta (atpFH).